A 339-amino-acid chain; its full sequence is Protein FAM76B (339 aa).

Residue Ala-2 is modified to N-acetylalanine. Phosphoserine occurs at positions 22 and 148. Positions 144–243 are disordered; sequence EQRKSLGSSH…INQSADSGGT (100 aa). Residues 148-160 show a composition bias toward low complexity; it reads SLGSSHSNSSSSS. Residues 167–189 show a composition bias toward basic residues; the sequence is HHSKHHHHHHHHHHRHSSGHHKV. Ser-193 is modified (phosphoserine). A Phosphothreonine modification is found at Thr-215. Residues 215-224 show a composition bias toward basic and acidic residues; the sequence is TPKKKPKLES. Residues 228 to 243 show a composition bias toward polar residues; that stretch reads NGDSSSINQSADSGGT. Positions 248–328 form a coiled coil; sequence LISQLKEEVM…QVAALSKGKK (81 aa).

It belongs to the FAM76 family. Interacts with HNRNPA2B1 (via C-terminus); the interaction results in retention of HNRNPA2B1 in the nucleus and inhibition of the NF-kappa-B-mediated inflammatory pathway.

Its subcellular location is the nucleus speckle. Negatively regulates the NF-kappa-B-mediated inflammatory pathway by preventing the translocation of HNRNPA2B1 from the nucleus to the cytoplasm. Inhibits the PI3K/Akt/NF-kappa-B pathway-mediated polarization of M1 macrophages by binding to and stabilizing PIK3CD mRNA, resulting in increased levels of PIK3CD protein and increased levels of phosphorylated downstream target AKT which leads to decreased NF-kappa-B signaling. The chain is Protein FAM76B (Fam76b) from Mus musculus (Mouse).